A 187-amino-acid polypeptide reads, in one-letter code: Transcriptional repressor NrdR (187 aa).

A zinc finger spans residues 3 to 34 (CPFCRHPDSRVVDSRTTDDGTSIRRRRQCPDC). One can recognise an ATP-cone domain in the interval 46-136 (LMVVKRSGVT…VYRAFDSLED (91 aa)). The segment at 146-187 (EEQRERPAVDDEDHEDAGAERQGTDRGSGGTVEVPVPATVAD) is disordered.

Belongs to the NrdR family. The cofactor is Zn(2+).

Negatively regulates transcription of bacterial ribonucleotide reductase nrd genes and operons by binding to NrdR-boxes. The protein is Transcriptional repressor NrdR of Streptomyces avermitilis (strain ATCC 31267 / DSM 46492 / JCM 5070 / NBRC 14893 / NCIMB 12804 / NRRL 8165 / MA-4680).